The sequence spans 122 residues: Small ribosomal subunit protein uS13 (122 aa).

The interval 99–122 (RGQRTHTNARTRKGPAKAIAGKKK) is disordered.

The protein belongs to the universal ribosomal protein uS13 family. In terms of assembly, part of the 30S ribosomal subunit. Forms a loose heterodimer with protein S19. Forms two bridges to the 50S subunit in the 70S ribosome.

Its function is as follows. Located at the top of the head of the 30S subunit, it contacts several helices of the 16S rRNA. In the 70S ribosome it contacts the 23S rRNA (bridge B1a) and protein L5 of the 50S subunit (bridge B1b), connecting the 2 subunits; these bridges are implicated in subunit movement. Contacts the tRNAs in the A and P-sites. This is Small ribosomal subunit protein uS13 from Rhizobium leguminosarum bv. trifolii (strain WSM2304).